We begin with the raw amino-acid sequence, 82 residues long: MVTIRLSRGGAKKRPFYQIVVADSRSPRDGRFIERVGFFNPIAQGNAERLRINLERVNHWVAQGASLSDRVASLVKEAQKAA.

This sequence belongs to the bacterial ribosomal protein bS16 family.

This chain is Small ribosomal subunit protein bS16, found in Haemophilus influenzae (strain 86-028NP).